A 208-amino-acid chain; its full sequence is ATP synthase subunit b (208 aa).

A compositionally biased stretch (polar residues) spans 1–18; it reads MFVSTAFAQTATESQPAS. The disordered stretch occupies residues 1–26; sequence MFVSTAFAQTATESQPASTAGEHGAA. Residues 56 to 78 form a helical membrane-spanning segment; that stretch reads SQVLWLAITFGLFYLFLSRVVLP.

Belongs to the ATPase B chain family. As to quaternary structure, F-type ATPases have 2 components, F(1) - the catalytic core - and F(0) - the membrane proton channel. F(1) has five subunits: alpha(3), beta(3), gamma(1), delta(1), epsilon(1). F(0) has three main subunits: a(1), b(2) and c(10-14). The alpha and beta chains form an alternating ring which encloses part of the gamma chain. F(1) is attached to F(0) by a central stalk formed by the gamma and epsilon chains, while a peripheral stalk is formed by the delta and b chains.

It localises to the cell inner membrane. F(1)F(0) ATP synthase produces ATP from ADP in the presence of a proton or sodium gradient. F-type ATPases consist of two structural domains, F(1) containing the extramembraneous catalytic core and F(0) containing the membrane proton channel, linked together by a central stalk and a peripheral stalk. During catalysis, ATP synthesis in the catalytic domain of F(1) is coupled via a rotary mechanism of the central stalk subunits to proton translocation. Functionally, component of the F(0) channel, it forms part of the peripheral stalk, linking F(1) to F(0). This chain is ATP synthase subunit b, found in Brucella melitensis biotype 1 (strain ATCC 23456 / CCUG 17765 / NCTC 10094 / 16M).